Reading from the N-terminus, the 541-residue chain is Long-chain-fatty-acid--CoA ligase (541 aa).

Threonine 184 lines the Mg(2+) pocket. Residues valine 231 and tryptophan 234 each contribute to the ATP site. Glycine 302, glutamine 322, glycine 323, and threonine 327 together coordinate tetradecanoyl-AMP. ATP-binding residues include glycine 323 and threonine 327. Position 328 (glutamate 328) interacts with Mg(2+). ATP contacts are provided by aspartate 418, lysine 435, lysine 439, and tryptophan 444. Aspartate 418, lysine 435, and lysine 439 together coordinate tetradecanoyl-AMP.

This sequence belongs to the ATP-dependent AMP-binding enzyme family. As to quaternary structure, forms a domain swapped homodimer. It depends on Mg(2+) as a cofactor.

The enzyme catalyses a long-chain fatty acid + ATP + CoA = a long-chain fatty acyl-CoA + AMP + diphosphate. It carries out the reaction tetradecanoate + ATP + CoA = tetradecanoyl-CoA + AMP + diphosphate. The catalysed reaction is hexadecanoate + ATP + CoA = hexadecanoyl-CoA + AMP + diphosphate. It functions in the pathway lipid metabolism; fatty acid metabolism. Catalyzes the esterification of a number of long chain fatty acids with CoA, resulting in the formation of long-chain fatty acyl-CoA. Myristate (C14) is the most efficiently processed fatty acid, followed by palmitate (C16). Also catalyzes the esterification of stearate (C18) and laurate (C12), but at lower efficiency. Does not catalyze the esterification of the unsaturated fatty acids mysteroleic and palmitoleic acids in vitro. This chain is Long-chain-fatty-acid--CoA ligase, found in Thermus thermophilus (strain ATCC 27634 / DSM 579 / HB8).